Reading from the N-terminus, the 215-residue chain is UPF0323 lipoprotein jhp_0217 (215 aa).

The signal sequence occupies residues 1–27; sequence MKKPYRKISDYAIVGGLSALVMVSIVG. The N-palmitoyl cysteine moiety is linked to residue cysteine 28. Residue cysteine 28 is the site of S-diacylglycerol cysteine attachment. Over residues 158 to 169 the composition is skewed to polar residues; that stretch reads QRTYKSPQAYQR. The disordered stretch occupies residues 158-215; it reads QRTYKSPQAYQRSQNSFSKSAPSASSMGTASKGQSGFFGSSRPTSSPAISSGTRGFNA. The segment covering 170–183 has biased composition (low complexity); that stretch reads SQNSFSKSAPSASS. Over residues 184-195 the composition is skewed to polar residues; sequence MGTASKGQSGFF. A compositionally biased stretch (low complexity) spans 197–208; the sequence is SSRPTSSPAISS.

It belongs to the UPF0323 family.

It localises to the cell membrane. In Helicobacter pylori (strain J99 / ATCC 700824) (Campylobacter pylori J99), this protein is UPF0323 lipoprotein jhp_0217.